A 301-amino-acid polypeptide reads, in one-letter code: Putative two-component membrane permease complex subunit SMU_747c (301 aa).

8 consecutive transmembrane segments (helical) span residues 15-35 (LAIF…GAIL), 60-80 (ILFG…IVPI), 97-117 (FLAT…SAFG), 124-144 (FLRL…LGFI), 188-208 (YLIF…TRIL), 211-231 (IGHN…ILSL), 238-258 (FIGT…FLLI), and 278-298 (FILQ…LIVG).

It belongs to the UPF0718 family. In terms of assembly, interacts with SMU_746c.

It is found in the cell membrane. In terms of biological role, could be part of a two-component membrane permease system responsible for amino acid transport under low pH. Involved in acidogenesis, biofilm formation and low-pH survival. The chain is Putative two-component membrane permease complex subunit SMU_747c from Streptococcus mutans serotype c (strain ATCC 700610 / UA159).